The sequence spans 65 residues: uncharacterized protein (65 aa).

2 helical membrane passes run 12 to 31 (IVKW…LIVV) and 41 to 63 (LVAR…AIIV).

Its subcellular location is the cell membrane. This is an uncharacterized protein from Halalkalibacterium halodurans (strain ATCC BAA-125 / DSM 18197 / FERM 7344 / JCM 9153 / C-125) (Bacillus halodurans).